Here is a 356-residue protein sequence, read N- to C-terminus: MGKRKTMQSFNLESFGKNLEKKLRRNPEQLQQPIKNYKSERERDIHELIYTIKSERMFIYKNAHRHLKLALENATLALNLPMLLKDFHVTLKEFDALEASLNAELECLELQYSSDTSELLLPVNSVNTSQNTINENAITTAIASLSVNPVNTSVALSTASTSTSTPTNTTTTTTTTSNSLTKNNNSALVSKPKTRGVRSKPIDMNSSDDEEDDQKDDQDKDDSDEDNVDNTPPLDSNDSKPPSSKTKGISKTKTKGNVSTAITTTTTPITTTDSNIIGTTTTTDDITEESKVKERPPRIFPENCYVCKVTETPYWRRGTDNGVVVDLCNECGLYYMNKEKKERLSRQKHSIKNVLN.

Positions 91-119 form a coiled coil; the sequence is LKEFDALEASLNAELECLELQYSSDTSEL. The segment covering 158–188 has biased composition (low complexity); it reads TASTSTSTPTNTTTTTTTTSNSLTKNNNSAL. Positions 158–294 are disordered; the sequence is TASTSTSTPT…DITEESKVKE (137 aa). Positions 206-228 are enriched in acidic residues; that stretch reads SSDDEEDDQKDDQDKDDSDEDNV. The span at 260–284 shows a compositional bias: low complexity; sequence TAITTTTTPITTTDSNIIGTTTTTD. The segment at 304-331 adopts a GATA-type zinc-finger fold; the sequence is CYVCKVTETPYWRRGTDNGVVVDLCNEC.

In Dictyostelium discoideum (Social amoeba), this protein is GATA zinc finger domain-containing protein 17 (gtaQ).